Consider the following 451-residue polypeptide: Phosphoglucosamine mutase (451 aa).

Catalysis depends on serine 107, which acts as the Phosphoserine intermediate. Mg(2+)-binding residues include serine 107, aspartate 246, aspartate 248, and aspartate 250. Serine 107 is modified (phosphoserine).

The protein belongs to the phosphohexose mutase family. Mg(2+) serves as cofactor. In terms of processing, activated by phosphorylation.

The enzyme catalyses alpha-D-glucosamine 1-phosphate = D-glucosamine 6-phosphate. Catalyzes the conversion of glucosamine-6-phosphate to glucosamine-1-phosphate. This Burkholderia ambifaria (strain ATCC BAA-244 / DSM 16087 / CCUG 44356 / LMG 19182 / AMMD) (Burkholderia cepacia (strain AMMD)) protein is Phosphoglucosamine mutase.